The sequence spans 107 residues: Integration host factor subunit beta (107 aa).

Positions 87–107 are disordered; the sequence is RERVNNGTRKNGGSADAASGG.

It belongs to the bacterial histone-like protein family. Heterodimer of an alpha and a beta chain.

Functionally, this protein is one of the two subunits of integration host factor, a specific DNA-binding protein that functions in genetic recombination as well as in transcriptional and translational control. The protein is Integration host factor subunit beta of Granulibacter bethesdensis (strain ATCC BAA-1260 / CGDNIH1).